The chain runs to 368 residues: Phosphate acyltransferase (368 aa).

The segment at 337–368 (LGEGEHNAGGAGHASPAAGHHAEPSAAQSSKA) is disordered. Residues 349–368 (HASPAAGHHAEPSAAQSSKA) show a composition bias toward low complexity.

Belongs to the PlsX family. In terms of assembly, homodimer. Probably interacts with PlsY.

The protein localises to the cytoplasm. It catalyses the reaction a fatty acyl-[ACP] + phosphate = an acyl phosphate + holo-[ACP]. The protein operates within lipid metabolism; phospholipid metabolism. Functionally, catalyzes the reversible formation of acyl-phosphate (acyl-PO(4)) from acyl-[acyl-carrier-protein] (acyl-ACP). This enzyme utilizes acyl-ACP as fatty acyl donor, but not acyl-CoA. The chain is Phosphate acyltransferase from Burkholderia lata (strain ATCC 17760 / DSM 23089 / LMG 22485 / NCIMB 9086 / R18194 / 383).